The sequence spans 262 residues: Putative hydro-lyase BLi00500/BL02808 (262 aa).

The protein belongs to the D-glutamate cyclase family.

The sequence is that of Putative hydro-lyase BLi00500/BL02808 from Bacillus licheniformis (strain ATCC 14580 / DSM 13 / JCM 2505 / CCUG 7422 / NBRC 12200 / NCIMB 9375 / NCTC 10341 / NRRL NRS-1264 / Gibson 46).